The sequence spans 502 residues: Serine/threonine-protein kinase SKS1 (502 aa).

The Protein kinase domain maps to 10 to 338 (FRITAQIGSG…SEVSSLTSFT (329 aa)). Residues 16–24 (IGSGAYGLV) and Lys39 contribute to the ATP site. Asp186 serves as the catalytic Proton acceptor. Low complexity-rich tracts occupy residues 376 to 391 (QEQQ…QVQE) and 399 to 410 (EQIQNQEQAQQQ). The segment at 376–439 (QEQQQQQQQQ…GSMEKYEYTN (64 aa)) is disordered. The segment covering 411–420 (QEEEDAEPES) has biased composition (acidic residues).

This sequence belongs to the protein kinase superfamily. Ser/Thr protein kinase family.

It catalyses the reaction L-seryl-[protein] + ATP = O-phospho-L-seryl-[protein] + ADP + H(+). The enzyme catalyses L-threonyl-[protein] + ATP = O-phospho-L-threonyl-[protein] + ADP + H(+). May have a role in glucose regulation. The protein is Serine/threonine-protein kinase SKS1 (SKS1) of Saccharomyces cerevisiae (strain ATCC 204508 / S288c) (Baker's yeast).